The primary structure comprises 248 residues: Coproheme decarboxylase (248 aa).

Fe-coproporphyrin III-binding positions include R130, Y144, 144-148 (YPMDK), K148, H171, Q184, and S222. Y144 is an active-site residue.

It belongs to the ChdC family. Type 1 subfamily. In terms of assembly, homopentamer. It depends on Fe-coproporphyrin III as a cofactor.

The enzyme catalyses Fe-coproporphyrin III + 2 H2O2 + 2 H(+) = heme b + 2 CO2 + 4 H2O. It catalyses the reaction Fe-coproporphyrin III + H2O2 + H(+) = harderoheme III + CO2 + 2 H2O. The catalysed reaction is harderoheme III + H2O2 + H(+) = heme b + CO2 + 2 H2O. It participates in porphyrin-containing compound metabolism; protoheme biosynthesis. Involved in coproporphyrin-dependent heme b biosynthesis. Catalyzes the decarboxylation of Fe-coproporphyrin III (coproheme) to heme b (protoheme IX), the last step of the pathway. The reaction occurs in a stepwise manner with a three-propionate harderoheme intermediate. This Geobacillus stearothermophilus (strain DSM 13240 / CIP 106956 / 10) protein is Coproheme decarboxylase.